Consider the following 239-residue polypeptide: Homeobox protein Nkx-2.8 (239 aa).

Residues 1-11 are compositionally biased toward polar residues; it reads MATSGRLSFTV. Positions 1 to 87 are disordered; it reads MATSGRLSFT…GSDAEKRKKR (87 aa). Basic and acidic residues predominate over residues 21–32; it reads DAQHLPRREPEP. Low complexity predominate over residues 62–79; that stretch reads SPPDSSQRPSARPASPGS. A DNA-binding region (homeobox) is located at residues 84-143; the sequence is RKKRRVLFSKAQTLELERRFRQQRYLSAPEREQLASLLRLTPTQVKIWFQNHRYKLKRAR.

This sequence belongs to the NK-2 homeobox family.

Its subcellular location is the nucleus. In Homo sapiens (Human), this protein is Homeobox protein Nkx-2.8 (NKX2-8).